Reading from the N-terminus, the 301-residue chain is NADH-cytochrome b5 reductase 2 (301 aa).

The chain crosses the membrane as a helical span at residues 14 to 30 (FLVPFAGATALSIGLAL). In terms of domain architecture, FAD-binding FR-type spans 51–155 (NEWVDLKLSK…KGPIVKWKWE (105 aa)). FAD is bound at residue 158–193 (QFKSIALIGGGTGITPLYQLLHQITSNPKDNTKVNL).

It belongs to the flavoprotein pyridine nucleotide cytochrome reductase family. It depends on FAD as a cofactor.

The protein localises to the mitochondrion outer membrane. It catalyses the reaction 2 Fe(III)-[cytochrome b5] + NADH = 2 Fe(II)-[cytochrome b5] + NAD(+) + H(+). Functionally, may mediate the reduction of outer membrane cytochrome b5. The polypeptide is NADH-cytochrome b5 reductase 2 (MCR1) (Candida albicans (strain SC5314 / ATCC MYA-2876) (Yeast)).